A 453-amino-acid polypeptide reads, in one-letter code: Na(+)/H(+) antiporter NhaA (453 aa).

11 helical membrane-spanning segments follow: residues 22-42 (ASLL…SPWA), 72-92 (MLAF…GLEI), 108-128 (LLPI…YMLV), 137-157 (GAAI…GLLG), 166-186 (IFLT…IALF), 189-209 (GHIA…LYVG), 218-238 (LFFY…GIHP), 316-336 (PLVN…VTFG), 343-363 (LVNV…LGIF), 386-406 (LFGV…IANL), and 424-444 (LGVF…LKWV).

The protein belongs to the NhaA Na(+)/H(+) (TC 2.A.33) antiporter family.

Its subcellular location is the cell inner membrane. It carries out the reaction Na(+)(in) + 2 H(+)(out) = Na(+)(out) + 2 H(+)(in). Functionally, na(+)/H(+) antiporter that extrudes sodium in exchange for external protons. This chain is Na(+)/H(+) antiporter NhaA, found in Parabacteroides distasonis (strain ATCC 8503 / DSM 20701 / CIP 104284 / JCM 5825 / NCTC 11152).